A 569-amino-acid chain; its full sequence is Formate hydrogenlyase subunit 5 (569 aa).

Residues 538–569 (MTVVDVRKKKSKVVPYKELERYSIERKNSPLK) constitute a propeptide that is removed on maturation.

This sequence belongs to the complex I 49 kDa subunit family. FHL comprises of a formate dehydrogenase, unidentified electron carriers and a hydrogenase (isoenzyme 3). In this non-energy conserving pathway molecular hydrogen and carbodioxide from formate are released. [4Fe-4S] cluster is required as a cofactor. Ni(2+) serves as cofactor.

In Escherichia coli (strain K12), this protein is Formate hydrogenlyase subunit 5 (hycE).